Reading from the N-terminus, the 207-residue chain is Transcriptional regulatory protein RcsA (207 aa).

Residues 131-196 (LTLPTLSLSK…VIYHIVRLTE (66 aa)) form the HTH luxR-type domain. A DNA-binding region (H-T-H motif) is located at residues 155-174 (TSQISTQMNIKAKTVSSHKG).

It belongs to the RcsA family.

In terms of biological role, component of the Rcs signaling system, which controls transcription of numerous genes. Binds to DNA to regulate expression of genes. In Klebsiella aerogenes (Enterobacter aerogenes), this protein is Transcriptional regulatory protein RcsA.